The primary structure comprises 431 residues: Tyrosine--tRNA ligase (431 aa).

Tyrosine 33 contacts L-tyrosine. Residues 38-47 (PTADSLHIGS) carry the 'HIGH' region motif. L-tyrosine-binding residues include tyrosine 172 and glutamine 176. The 'KMSKS' region motif lies at 234-238 (KFGKS). ATP is bound at residue lysine 237. The S4 RNA-binding domain occupies 364–431 (LDIVTVLNEK…KKNYFVIRVV (68 aa)).

Belongs to the class-I aminoacyl-tRNA synthetase family. TyrS type 1 subfamily. In terms of assembly, homodimer.

The protein localises to the cytoplasm. It catalyses the reaction tRNA(Tyr) + L-tyrosine + ATP = L-tyrosyl-tRNA(Tyr) + AMP + diphosphate + H(+). In terms of biological role, catalyzes the attachment of tyrosine to tRNA(Tyr) in a two-step reaction: tyrosine is first activated by ATP to form Tyr-AMP and then transferred to the acceptor end of tRNA(Tyr). In Flavobacterium johnsoniae (strain ATCC 17061 / DSM 2064 / JCM 8514 / BCRC 14874 / CCUG 350202 / NBRC 14942 / NCIMB 11054 / UW101) (Cytophaga johnsonae), this protein is Tyrosine--tRNA ligase.